Reading from the N-terminus, the 913-residue chain is Vacuolar membrane protease (913 aa).

Over 1-15 (MMANYFRSTFKFRKT) the chain is Cytoplasmic. The helical transmembrane segment at 16 to 36 (TVSTLFVLTVLVISILTWFDA) threads the bilayer. Over 37-364 (NKYKSNLPDD…FFVVSARQLY (328 aa)) the chain is Vacuolar. An N-linked (GlcNAc...) asparagine glycan is attached at N117. 2 residues coordinate Zn(2+): H152 and D164. E196 (proton acceptor) is an active-site residue. Residues E197, E222, and H296 each coordinate Zn(2+). Residues 365–385 (VWNIVLLCVLPITLILLRIVC) traverse the membrane as a helical segment. Residues 386–394 (NKLGTWRMP) are Cytoplasmic-facing. The helical transmembrane segment at 395-415 (TSALFTRIPFALFVSSFTIYF) threads the bilayer. Residues 416 to 431 (TKELLLQLNPTIWSRN) are Vacuolar-facing. A helical transmembrane segment spans residues 432–452 (FILPFLFCISEFLLINTLVLA). Residues 453–465 (LFEYLWPIQDFKT) are Cytoplasmic-facing. The helical transmembrane segment at 466 to 486 (LSLLELSAIAWLFLLKCTWDL) threads the bilayer. The Vacuolar segment spans residues 487-494 (SSSGFKAT). The helical transmembrane segment at 495–515 (GVYPVTVFYLFISLASMFGLC) threads the bilayer. Residues 516–600 (SMCFGKRPNA…TLNYDWSAQY (85 aa)) are Cytoplasmic-facing. Over residues 540-552 (NDTHSIECPRQPE) the composition is skewed to basic and acidic residues. Residues 540–578 (NDTHSIECPRQPEDSETTETSPLINTPSSSVQSSPIASS) are disordered. Over residues 557-566 (TETSPLINTP) the composition is skewed to polar residues. Positions 567–578 (SSSVQSSPIASS) are enriched in low complexity. Residues 601–621 (LLAVPINAFLIWESLFNLFDA) traverse the membrane as a helical segment. Over 622–634 (LSMTVQESNKATE) the chain is Vacuolar. Residues 635–655 (AVFKFAIYGAIFLCSPLLPFT) form a helical membrane-spanning segment. Residues 656-660 (TKLNR) lie on the Cytoplasmic side of the membrane. Residues 661 to 681 (FVVIILGVVTILAASFSLFAA) traverse the membrane as a helical segment. Residues 682–913 (PYTELAPLKL…MVTIHKYLEL (232 aa)) are Vacuolar-facing. N729, N794, and N810 each carry an N-linked (GlcNAc...) asparagine glycan.

Belongs to the peptidase M28 family. The cofactor is Zn(2+).

It localises to the vacuole membrane. Its function is as follows. May be involved in vacuolar sorting and osmoregulation. This is Vacuolar membrane protease from Kluyveromyces lactis (strain ATCC 8585 / CBS 2359 / DSM 70799 / NBRC 1267 / NRRL Y-1140 / WM37) (Yeast).